A 441-amino-acid polypeptide reads, in one-letter code: MLNLFDNFDQASFDFLRSQRTAQIKIPTVVINDDGFLPPEVESPIKYWGNYNVNKKPLYFDHLSLPRYWRILSTAAQGHIYDLDKKRADIIYQATDNTRQVKEVRWLNNNGKVSWIDHYNRYGYRFAQTYYRNEQPAWRKYYDKKNRVFLEWNLIAGDFFLDVDGGYHFPSLIELVKYYLQTRHFKLDHIFYNTLNQGLSVSLNLPADGSDTLFWHEPLSGDELPGNMKFLMENSTRTKHIIFQRYTDWQRIGANLKNNHVDFGFLGTIYPHPRANQLRPQALILTNSDEIVELSTLIKNLPNIKFHIAAVTEMSGKLLAYQQYENVELYPNVSSARVKQLIADCDIYLDINRQNEILDAVRGAFEQNMLIVGFDETLHEPQFVTPQNMFKVNEAQKMSKHIMAALLKPALMKELIDTQRQLASEVSVQDYQRMIGALQSE.

Belongs to the GtfB family. In terms of assembly, forms a heterotetramer with 2 subunits each of GtfA and GtfB. Part of the accessory SecA2/SecY2 protein translocation apparatus.

It is found in the cell membrane. It participates in protein modification; protein glycosylation. Its function is as follows. Required for polymorphic O-glycosylation of the serine-rich repeat protein (SRRP) in this bacteria. A stabilizing protein that is part of the accessory SecA2/SecY2 system specifically required to export serine-rich repeat cell wall proteins encoded in the same operon. The GtfA-GtfB complex adds GlcNAc from UDP-GlcNAc to the substrate protein, attaching the first sugar residue. Stabilizes the glycosylation activity of GtfA. Has no N-acetylglucosaminyl transferase activity on its own. In Limosilactobacillus reuteri subsp. suis (strain ATCC 53608 / LMG 31752 / 1063) (Lactobacillus reuteri), this protein is UDP-N-acetylglucosamine--peptide N-acetylglucosaminyltransferase stabilizing protein GtfB.